The following is a 1193-amino-acid chain: Cysteine protease ATG4 (1193 aa).

2 disordered regions span residues 23-284 (AAIA…NKMS) and 358-474 (WRPI…KKKS). Positions 35 to 49 (NLPPPPPPDRIPPPK) are enriched in pro residues. Over residues 50 to 59 (GRSHQQKFKI) the composition is skewed to basic residues. 3 stretches are compositionally biased toward basic and acidic residues: residues 60–72 (LRKE…RQPI), 117–127 (ANREEKKEKTS), and 140–153 (FGRD…KPEE). The segment covering 170–185 (SSSTSTDSTTSRSITS) has biased composition (low complexity). The span at 186–205 (AFTRQNSIQSRRSPRTSFGQ) shows a compositional bias: polar residues. The segment covering 227-238 (SSTTSHDPSSDP) has biased composition (low complexity). Polar residues-rich tracts occupy residues 253–262 (QGASMSSLSR), 270–284 (GGTS…NKMS), and 389–447 (LSMN…STLS). Cys-570 acts as the Nucleophile in catalysis. Active-site residues include Asp-789 and His-791. 3 disordered regions span residues 807-869 (HSAK…SKYK), 899-924 (VPKS…TSTA), and 1000-1171 (QDEM…PARN). A compositionally biased stretch (low complexity) spans 835-846 (RTPETPRSTTPS). 2 stretches are compositionally biased toward acidic residues: residues 1004–1029 (PSWE…EFEE) and 1070–1084 (HLDV…DDNE). Composition is skewed to basic and acidic residues over residues 1097–1112 (IARH…KREQ) and 1152–1164 (PRYE…EQER).

The protein belongs to the peptidase C54 family.

Its subcellular location is the cytoplasm. The protein localises to the nucleus. It localises to the preautophagosomal structure. It carries out the reaction [protein]-C-terminal L-amino acid-glycyl-phosphatidylethanolamide + H2O = [protein]-C-terminal L-amino acid-glycine + a 1,2-diacyl-sn-glycero-3-phosphoethanolamine. Its function is as follows. Cysteine protease that plays a key role in cytoplasm to vacuole transport (Cvt) and autophagy by mediating both proteolytic activation and delipidation of ATG8. Required for selective autophagic degradation of the nucleus (nucleophagy) as well as for mitophagy which contributes to regulate mitochondrial quantity and quality by eliminating the mitochondria to a basal level to fulfill cellular energy requirements and preventing excess ROS production. The protease activity is required for proteolytic activation of ATG8: cleaves the C-terminal amino acid of ATG8 to reveal a C-terminal glycine. ATG8 ubiquitin-like activity requires the exposure of the glycine at the C-terminus for its conjugation to phosphatidylethanolamine (PE) and its insertion to membranes, which is necessary for autophagy. The ATG8-PE conjugate mediates tethering between adjacent membranes and stimulates membrane hemifusion, leading to expansion of the autophagosomal membrane during autophagy. In addition to the protease activity, also catalyzes deconjugation of PE-conjugated forms of ATG8 during macroautophagy: ATG8 delipidation is required to release the protein from membranes, which facilitates multiple events during macroautophagy, and especially for efficient autophagosome biogenesis, the assembly of ATG9-containing tubulovesicular clusters into phagophores/autophagosomes, and for the disassembly of PAS-associated ATG components. ATG8 delipidation by ATG4 also recycles ATG8-PE generated on inappropriate membranes to maintain a reservoir of unlipidated ATG8 that is required for autophagosome formation at the PAS. This chain is Cysteine protease ATG4 (ATG4), found in Cryptococcus neoformans var. neoformans serotype D (strain JEC21 / ATCC MYA-565) (Filobasidiella neoformans).